The primary structure comprises 407 residues: Na(+)-translocating NADH-quinone reductase subunit F (407 aa).

Residues 3–23 (IILGVVMFTLIVLALTVMILF) form a helical membrane-spanning segment. Positions 32 to 126 (GDITVEINED…NLKIELPEEI (95 aa)) constitute a 2Fe-2S ferredoxin-type domain. Residues C69, C75, C78, and C110 each contribute to the [2Fe-2S] cluster site. The FAD-binding FR-type domain occupies 129 to 269 (VKKWTCEVIS…SGPFGEFFAK (141 aa)).

Belongs to the NqrF family. Composed of six subunits; NqrA, NqrB, NqrC, NqrD, NqrE and NqrF. [2Fe-2S] cluster is required as a cofactor. It depends on FAD as a cofactor.

The protein localises to the cell inner membrane. It carries out the reaction a ubiquinone + n Na(+)(in) + NADH + H(+) = a ubiquinol + n Na(+)(out) + NAD(+). NQR complex catalyzes the reduction of ubiquinone-1 to ubiquinol by two successive reactions, coupled with the transport of Na(+) ions from the cytoplasm to the periplasm. The first step is catalyzed by NqrF, which accepts electrons from NADH and reduces ubiquinone-1 to ubisemiquinone by a one-electron transfer pathway. This chain is Na(+)-translocating NADH-quinone reductase subunit F, found in Yersinia pseudotuberculosis serotype O:1b (strain IP 31758).